Reading from the N-terminus, the 438-residue chain is L-cysteine:1D-myo-inositol 2-amino-2-deoxy-alpha-D-glucopyranoside ligase (438 aa).

Positions 1–27 are disordered; it reads MDSWTSPDVPALPFTAEGPRVHDTARG. Cys45 provides a ligand contact to Zn(2+). L-cysteinyl-5'-AMP is bound by residues 45-48, Thr60, and 83-85; these read CGIT and NVT. The short motif at 47 to 57 is the 'HIGH' region element; it reads ITPYDATHLGH. Positions 197 to 202 match the 'ERGGDP' region motif; that stretch reads DRGGDP. Residue Trp238 participates in L-cysteinyl-5'-AMP binding. Cys242 contributes to the Zn(2+) binding site. Residue 260 to 262 coordinates L-cysteinyl-5'-AMP; it reads GDD. Residue His267 participates in Zn(2+) binding. Val293 contributes to the L-cysteinyl-5'-AMP binding site. The 'KMSKS' region motif lies at 299–303; that stretch reads KMSKS.

It belongs to the class-I aminoacyl-tRNA synthetase family. MshC subfamily. Monomer. Zn(2+) is required as a cofactor.

The catalysed reaction is 1D-myo-inositol 2-amino-2-deoxy-alpha-D-glucopyranoside + L-cysteine + ATP = 1D-myo-inositol 2-(L-cysteinylamino)-2-deoxy-alpha-D-glucopyranoside + AMP + diphosphate + H(+). Functionally, catalyzes the ATP-dependent condensation of GlcN-Ins and L-cysteine to form L-Cys-GlcN-Ins. The sequence is that of L-cysteine:1D-myo-inositol 2-amino-2-deoxy-alpha-D-glucopyranoside ligase from Kytococcus sedentarius (strain ATCC 14392 / DSM 20547 / JCM 11482 / CCUG 33030 / NBRC 15357 / NCTC 11040 / CCM 314 / 541) (Micrococcus sedentarius).